Here is a 509-residue protein sequence, read N- to C-terminus: GMP synthase [glutamine-hydrolyzing] (509 aa).

In terms of domain architecture, Glutamine amidotransferase type-1 spans 4–193 (NVLILDFGSQ…LIKIAGTKAT (190 aa)). The active-site Nucleophile is the Cys-79. Active-site residues include His-167 and Glu-169. Residues 194 to 384 (WTPGKFVDLT…LGIDKELLGR (191 aa)) form the GMPS ATP-PPase domain. 221–227 (SGGVDST) contributes to the ATP binding site.

In terms of assembly, homodimer.

The enzyme catalyses XMP + L-glutamine + ATP + H2O = GMP + L-glutamate + AMP + diphosphate + 2 H(+). Its pathway is purine metabolism; GMP biosynthesis; GMP from XMP (L-Gln route): step 1/1. Its function is as follows. Catalyzes the synthesis of GMP from XMP. The chain is GMP synthase [glutamine-hydrolyzing] from Christiangramia forsetii (strain DSM 17595 / CGMCC 1.15422 / KT0803) (Gramella forsetii).